Consider the following 461-residue polypeptide: Cysteine--tRNA ligase (461 aa).

Cysteine 28 provides a ligand contact to Zn(2+). The 'HIGH' region motif lies at 30 to 40; the sequence is ITVYDLCHIGH. Zn(2+)-binding residues include cysteine 209, histidine 234, and glutamate 238. Positions 266–270 match the 'KMSKS' region motif; that stretch reads KMSKS. An ATP-binding site is contributed by lysine 269.

Belongs to the class-I aminoacyl-tRNA synthetase family. Monomer. Requires Zn(2+) as cofactor.

It localises to the cytoplasm. The enzyme catalyses tRNA(Cys) + L-cysteine + ATP = L-cysteinyl-tRNA(Cys) + AMP + diphosphate. In Escherichia coli O17:K52:H18 (strain UMN026 / ExPEC), this protein is Cysteine--tRNA ligase.